Consider the following 388-residue polypeptide: Flap endonuclease 1 (388 aa).

The segment at 1-104 is N-domain; that stretch reads MGILGLSKLI…GELAKRAERR (104 aa). Position 34 (Asp-34) interacts with Mg(2+). DNA-binding residues include Arg-47 and Arg-70. Residues Asp-86, Glu-158, Glu-160, Asp-179, and Asp-181 each contribute to the Mg(2+) site. Residues 122-253 are I-domain; the sequence is EIEKFNRRLV…KRAIELINNY (132 aa). DNA is bound at residue Glu-158. The DNA site is built by Gly-231 and Asp-233. Asp-233 lines the Mg(2+) pocket. An interaction with PCNA region spans residues 336-344; the sequence is TQVRLDSFF. Residues 343 to 388 form a disordered region; that stretch reads FFKTLPSTPSATNAAKRKAEEAKKSANNKKAKTSGGGGGGRGRRPK.

Belongs to the XPG/RAD2 endonuclease family. FEN1 subfamily. Interacts with PCNA. Three molecules of FEN1 bind to one PCNA trimer with each molecule binding to one PCNA monomer. PCNA stimulates the nuclease activity without altering cleavage specificity. It depends on Mg(2+) as a cofactor. Post-translationally, phosphorylated. Phosphorylation upon DNA damage induces relocalization to the nuclear plasma.

It is found in the nucleus. Its subcellular location is the nucleolus. The protein localises to the nucleoplasm. The protein resides in the mitochondrion. In terms of biological role, structure-specific nuclease with 5'-flap endonuclease and 5'-3' exonuclease activities involved in DNA replication and repair. During DNA replication, cleaves the 5'-overhanging flap structure that is generated by displacement synthesis when DNA polymerase encounters the 5'-end of a downstream Okazaki fragment. It enters the flap from the 5'-end and then tracks to cleave the flap base, leaving a nick for ligation. Also involved in the long patch base excision repair (LP-BER) pathway, by cleaving within the apurinic/apyrimidinic (AP) site-terminated flap. Acts as a genome stabilization factor that prevents flaps from equilibrating into structures that lead to duplications and deletions. Also possesses 5'-3' exonuclease activity on nicked or gapped double-stranded DNA, and exhibits RNase H activity. Also involved in replication and repair of rDNA and in repairing mitochondrial DNA. In Drosophila ananassae (Fruit fly), this protein is Flap endonuclease 1.